A 380-amino-acid polypeptide reads, in one-letter code: Serpin B7 (380 aa).

A Phosphoserine modification is found at S217.

The protein belongs to the serpin family. Ov-serpin subfamily.

It is found in the cytoplasm. Might function as an inhibitor of Lys-specific proteases. Might influence the maturation of megakaryocytes via its action as a serpin. This is Serpin B7 (Serpinb7) from Mus musculus (Mouse).